We begin with the raw amino-acid sequence, 410 residues long: Ribose 1,5-bisphosphate phosphokinase PhnN (410 aa).

The tract at residues 1–220 (MRYAVYLAPP…VWLLMAGSTS (220 aa)) is unknown. Residues 221 to 410 (MRTETGQLIY…SHCHQPITAL (190 aa)) are ribose 1,5-bisphosphokinase. 233–240 (GPSGAGKD) is an ATP binding site.

This sequence in the C-terminal section; belongs to the ribose 1,5-bisphosphokinase family.

It catalyses the reaction alpha-D-ribose 1,5-bisphosphate + ATP = 5-phospho-alpha-D-ribose 1-diphosphate + ADP. Its pathway is metabolic intermediate biosynthesis; 5-phospho-alpha-D-ribose 1-diphosphate biosynthesis; 5-phospho-alpha-D-ribose 1-diphosphate from D-ribose 5-phosphate (route II): step 3/3. Functionally, catalyzes the phosphorylation of ribose 1,5-bisphosphate to 5-phospho-D-ribosyl alpha-1-diphosphate (PRPP). The polypeptide is Ribose 1,5-bisphosphate phosphokinase PhnN (phnN) (Laribacter hongkongensis (strain HLHK9)).